The chain runs to 347 residues: Aspartate carbamoyltransferase catalytic subunit (347 aa).

2 residues coordinate carbamoyl phosphate: arginine 75 and threonine 76. Residue lysine 103 participates in L-aspartate binding. 3 residues coordinate carbamoyl phosphate: arginine 125, histidine 153, and glutamine 156. L-aspartate contacts are provided by arginine 193 and arginine 247. Residues glycine 288 and proline 289 each coordinate carbamoyl phosphate.

The protein belongs to the aspartate/ornithine carbamoyltransferase superfamily. ATCase family. Heterododecamer (2C3:3R2) of six catalytic PyrB chains organized as two trimers (C3), and six regulatory PyrI chains organized as three dimers (R2).

It catalyses the reaction carbamoyl phosphate + L-aspartate = N-carbamoyl-L-aspartate + phosphate + H(+). It functions in the pathway pyrimidine metabolism; UMP biosynthesis via de novo pathway; (S)-dihydroorotate from bicarbonate: step 2/3. Its function is as follows. Catalyzes the condensation of carbamoyl phosphate and aspartate to form carbamoyl aspartate and inorganic phosphate, the committed step in the de novo pyrimidine nucleotide biosynthesis pathway. The sequence is that of Aspartate carbamoyltransferase catalytic subunit from Erythrobacter litoralis (strain HTCC2594).